Here is a 472-residue protein sequence, read N- to C-terminus: MNFLPIFLDIHDRNCVVAGGGEVAARKVAMLLRAGAHVTVVAPRLCSELLEQLNEQSREGKLAYRAETFQDEHLADAVLVIAATDDFAVNQRISEAAKRLRIPVNVVDNPGLCSFIMPSIVDRTPVVVAVSSGGASPVLTRLLRARLETMIPMAYGRLAAYAGEFRDRVKHRFSQPAQRRRFWERVLQGPFAEMVFAGKDQAAKAWLERELENETEEPVKGEVYLVGAGPGDPELLTFRAMRLMQQADVVVYDRLVSPEILDMLRRDTPRIYAGKERNRHTMPQESINDLLVRLAKEGKRVLRLKGGDPFIFGRGGEEIETLAGHGIPFEVVPGITAANGAASYAGIPLTHRDYAQSCIFVTGHLKDGSVDLDWPMLARPKQTIVVYMGLLGLTVLCKQLIAHGLPNNTPAAIVQQGTTRKQRVLAATLETLPELTAAAHLVPPTLVIVGEVVNLHRKLAWFQPEGNLPGAE.

Residues 1-207 (MNFLPIFLDI…GKDQAAKAWL (207 aa)) are precorrin-2 dehydrogenase /sirohydrochlorin ferrochelatase. NAD(+) is bound by residues 22-23 (EV) and 43-44 (PR). Phosphoserine is present on S132. The segment at 221–472 (GEVYLVGAGP…QPEGNLPGAE (252 aa)) is uroporphyrinogen-III C-methyltransferase. P230 is an S-adenosyl-L-methionine binding site. D253 serves as the catalytic Proton acceptor. K275 (proton donor) is an active-site residue. S-adenosyl-L-methionine contacts are provided by residues 306-308 (GGD), I311, 336-337 (TA), M388, and G417.

The protein in the N-terminal section; belongs to the precorrin-2 dehydrogenase / sirohydrochlorin ferrochelatase family. In the C-terminal section; belongs to the precorrin methyltransferase family.

The enzyme catalyses uroporphyrinogen III + 2 S-adenosyl-L-methionine = precorrin-2 + 2 S-adenosyl-L-homocysteine + H(+). The catalysed reaction is precorrin-2 + NAD(+) = sirohydrochlorin + NADH + 2 H(+). It carries out the reaction siroheme + 2 H(+) = sirohydrochlorin + Fe(2+). Its pathway is cofactor biosynthesis; adenosylcobalamin biosynthesis; precorrin-2 from uroporphyrinogen III: step 1/1. The protein operates within cofactor biosynthesis; adenosylcobalamin biosynthesis; sirohydrochlorin from precorrin-2: step 1/1. It participates in porphyrin-containing compound metabolism; siroheme biosynthesis; precorrin-2 from uroporphyrinogen III: step 1/1. It functions in the pathway porphyrin-containing compound metabolism; siroheme biosynthesis; siroheme from sirohydrochlorin: step 1/1. Its pathway is porphyrin-containing compound metabolism; siroheme biosynthesis; sirohydrochlorin from precorrin-2: step 1/1. Functionally, multifunctional enzyme that catalyzes the SAM-dependent methylations of uroporphyrinogen III at position C-2 and C-7 to form precorrin-2 via precorrin-1. Then it catalyzes the NAD-dependent ring dehydrogenation of precorrin-2 to yield sirohydrochlorin. Finally, it catalyzes the ferrochelation of sirohydrochlorin to yield siroheme. This is Siroheme synthase from Nitrosospira multiformis (strain ATCC 25196 / NCIMB 11849 / C 71).